The chain runs to 1851 residues: Protein lap4 (1851 aa).

LRR repeat units lie at residues 38–59 (TLEELFLDANHIRDLPKNFFRL), 61–82 (RLRKLGLSDNEIGRLPPDIQNF), 84–105 (NLVELDVSRNDIPDIPDDIKHL), 107–128 (SLQVADFSSNPIPKLPSGFSQL), 130–152 (NLTVLGLNDMSLTTLPADFGSLT), 153–174 (QLESLELRENLLKHLPETISQL), 176–197 (KLKRLDLGDNEIEDLPPYLGYL), 199–220 (GLHELWLDHNQLQRLPPELGLL), 222–243 (KLTYLDVSENRLEELPNEISGL), 245–267 (SLTDLDLAQNLLEALPDGIAKLS), 268–289 (RLTILKLDQNRLQRLNDTLGNC), 291–312 (NMQELILTENFLSELPASIGQM), 314–335 (KLNNLNVDRNALEYLPLEIGQC), 337–358 (NLGVLSLRDNKLKKLPPELGNC), 360–382 (VLHVLDVSGNQLLYLPYSLVNLQ), and 383–403 (LKAVWLSENQSQPLLTFQPDT). Disordered stretches follow at residues 427–474 (PARD…KDLK), 584–641 (VGGS…VQHL), and 656–719 (SQER…PDNL). Ser433 and Ser435 each carry phosphoserine. Residues 438–461 (FEEREPSRTVVKFSEEATQEKETP) show a composition bias toward basic and acidic residues. A coiled-coil region spans residues 471 to 492 (KDLKAKAQKLKVERSRNEEHAN). Residues 589-601 (EVQDDDEQEDEFE) are compositionally biased toward acidic residues. Positions 620-639 (RPPKLHRRDTPHHLKNKRVQ) are enriched in basic residues. Positions 656–672 (SQERNDTTPQHSLSGKV) are enriched in polar residues. Residues 676–686 (IEEEEQLEVEQ) are compositionally biased toward acidic residues. Residues 677 to 693 (EEEEQLEVEQEQQQQQQ) adopt a coiled-coil conformation. A phosphoserine mark is found at Ser700, Ser702, and Ser705. Residues 731–818 (EIHIERTAAG…VLVLVVQREV (88 aa)) enclose the PDZ 1 domain. Phosphoserine is present on residues Ser834 and Ser837. The region spanning 929-1019 (HTTLIRDQIG…FVRLVLQREY (91 aa)) is the PDZ 2 domain. Phosphoserine is present on residues Ser1031 and Ser1041. The segment at 1067–1150 (LATTTPTPKP…EAQPSSLRPL (84 aa)) is disordered. 2 stretches are compositionally biased toward polar residues: residues 1080-1097 (ASISNNNNTLPSSKTNGF) and 1132-1149 (GSTTSGDSGEAQPSSLRP). PDZ domains lie at 1239 to 1329 (EVVL…QHDP) and 1336 to 1428 (EVLL…CKGY). Residues 1448 to 1467 (NSSASCSGGSRQGSRASETG) are compositionally biased toward polar residues. The segment at 1448–1485 (NSSASCSGGSRQGSRASETGSELSQSQSVSSLDHEEDE) is disordered. Residues 1468-1478 (SELSQSQSVSS) show a composition bias toward low complexity. Residues Ser1475, Ser1477, and Ser1478 each carry the phosphoserine modification. Phosphothreonine is present on Thr1599. Residues 1647-1669 (AESANSAGAPSPAVPASTPGSAP) show a composition bias toward low complexity. 2 disordered regions span residues 1647–1751 (AESA…KVFS) and 1772–1851 (LRRD…VFRS). A compositionally biased stretch (basic and acidic residues) spans 1725–1751 (VSDKKRFFESAMEDQHKPTQKTDKVFS). Residues 1753 to 1790 (LSKDEVEKLRQEEERKIATLRRDKNSRLLDAANDNIDK) are a coiled coil. Over residues 1807–1816 (DDNDDSDQEE) the composition is skewed to acidic residues. Positions 1831-1851 (HFDDAEDMRNPLDEIEAVFRS) are enriched in basic and acidic residues.

Belongs to the LAP (LRR and PDZ) protein family. In terms of tissue distribution, during germ band extension, expression of isoform A occurs predominantly in neuroblasts derived from the neuro-ectoderm and later is restricted to CNS neurons and pole cells. Isoform C is strongly expressed in PNS and a subset of CNS neurons. In the adult, expressed in third antennal segment and maxillary palps, major olfactory organs and in Johnstons organ in the second antennal segment. Expression is also observed in cortical regions of the brain. Isoforms expressed in epithelia are coexpressed with dlg1 throughout development.

The protein resides in the cytoplasm. It localises to the apicolateral cell membrane. The protein localises to the cell junction. Its subcellular location is the septate junction. Its function is as follows. Required for polarization of the embryonic, imaginal disk and follicular epithelia. Specifically restricts apical membrane determinants to the apical cell surface; acts to exclude crb from the basolateral domain and define adherens junction position. Regulates cellular growth and differentiation; acts as a tumor suppressor. Essential for odor guided behavior. The sequence is that of Protein lap4 from Drosophila melanogaster (Fruit fly).